Consider the following 203-residue polypeptide: Large ribosomal subunit protein uL13 (203 aa).

A2 carries the N-acetylalanine modification. Citrulline is present on R59. The residue at position 77 (S77) is a Phosphoserine; by ZIPK/DAPK3. R140 is modified (citrulline). Residue K191 is modified to N6-acetyllysine.

The protein belongs to the universal ribosomal protein uL13 family. Component of the 60S ribosome. Component of the GAIT complex. Interacts with EIF4G1. Phosphorylation at Ser-77 upon interferon-gamma treatment in monocytes involves a DAPK1-DAPK3 kinase cascade and is causing release from the ribosome, association with the GAIT complex and subsequent involvement in transcript-selective translation inhibition. In terms of processing, citrullinated by PADI4.

Its subcellular location is the cytoplasm. Associated with ribosomes but is not required for canonical ribosome function and has extra-ribosomal functions. Component of the GAIT (gamma interferon-activated inhibitor of translation) complex which mediates interferon-gamma-induced transcript-selective translation inhibition in inflammation processes. Upon interferon-gamma activation and subsequent phosphorylation dissociates from the ribosome and assembles into the GAIT complex which binds to stem loop-containing GAIT elements in the 3'-UTR of diverse inflammatory mRNAs (such as ceruplasmin) and suppresses their translation. In the GAIT complex interacts with m7G cap-bound eIF4G at or near the eIF3-binding site and blocks the recruitment of the 43S ribosomal complex. Involved in methylation of rRNA. The sequence is that of Large ribosomal subunit protein uL13 (RPL13A) from Homo sapiens (Human).